The primary structure comprises 199 residues: Probable thymidylate kinase (199 aa).

9-16 (GIDGCGKT) serves as a coordination point for ATP.

This sequence belongs to the thymidylate kinase family.

The enzyme catalyses dTMP + ATP = dTDP + ADP. The protein is Probable thymidylate kinase of Methanococcus maripaludis (strain C6 / ATCC BAA-1332).